The sequence spans 144 residues: DNA polymerase III subunit chi (144 aa).

Belongs to the DNA polymerase III chi/HolC chain family. In terms of assembly, DNA polymerase III contains a core (composed of alpha, epsilon and theta chains) that associates with a tau subunit. This core dimerizes to form the POLIII' complex. PolIII' associates with the gamma complex (composed of gamma, delta, delta', psi and chi chains) and with the beta chain to form the complete DNA polymerase III complex. Interacts directly with the psi subunit (holD). The only subunit of the DNA polymerase III holoenzyme known to interact with single-stranded DNA binding protein (SSB), interacts directly with DNA helicase YoaA.

It catalyses the reaction DNA(n) + a 2'-deoxyribonucleoside 5'-triphosphate = DNA(n+1) + diphosphate. In terms of biological role, part of the beta sliding clamp loading complex, which hydrolyzes ATP to load the beta clamp onto primed DNA to form the DNA replication pre-initiation complex. DNA polymerase III is a complex, multichain enzyme responsible for most of the replicative synthesis in bacteria. This DNA polymerase also exhibits 3' to 5' exonuclease activity. This subunit may stabilize YoaA and/or stimulate the helicase activity of YoaA. This is DNA polymerase III subunit chi (holC) from Haemophilus influenzae (strain ATCC 51907 / DSM 11121 / KW20 / Rd).